A 607-amino-acid chain; its full sequence is Homologous recombination OB-fold protein (607 aa).

4 disordered regions span residues 25 to 49 (LRPNSSRPQETPQAHSSKLSPSYPA), 84 to 108 (ISSSSSGSQQRMTGTKVSQESSGRQ), 196 to 308 (PWPS…TTVT), and 531 to 581 (LKPP…DDLD). Polar residues-rich tracts occupy residues 27-49 (PNSSRPQETPQAHSSKLSPSYPA) and 92-108 (QQRMTGTKVSQESSGRQ). Serine 30 carries the post-translational modification Phosphoserine. An Asymmetric dimethylarginine modification is found at arginine 281. The segment covering 295–308 (SPFSTPRSTSTTVT) has biased composition (low complexity). The span at 570-581 (PEEELPEADDLD) shows a compositional bias: acidic residues.

Interacts with MCM8; this interaction is necessary for MCM8-MCM9 helicase complex recruitment to DNA damage sites. Interacts with RPA1; this interaction associates HROB with the RPA complex.

The protein resides in the nucleus. The protein localises to the chromosome. DNA-binding protein involved in homologous recombination that acts by recruiting the MCM8-MCM9 helicase complex to sites of DNA damage to promote DNA repair synthesis. The sequence is that of Homologous recombination OB-fold protein from Rattus norvegicus (Rat).